We begin with the raw amino-acid sequence, 84 residues long: Large ribosomal subunit protein bL27 (84 aa).

Positions 1–20 are disordered; that stretch reads MAHKKAGGSTRNGRDSHSKR.

Belongs to the bacterial ribosomal protein bL27 family.

The chain is Large ribosomal subunit protein bL27 from Blochmanniella pennsylvanica (strain BPEN).